A 377-amino-acid chain; its full sequence is Flagellin C (377 aa).

Coiled coils occupy residues 103 to 129 (SNSK…VAET) and 301 to 340 (VDSH…KDTD).

The protein belongs to the bacterial flagellin family. In terms of assembly, heteromer of multiple flagellin subunits including FlaA, FlaB, FlaC, FlaD and FlaE.

Its subcellular location is the secreted. The protein resides in the bacterial flagellum. Flagellin is the subunit protein which polymerizes to form the filaments of bacterial flagella. FlaC is not essential for flagellar synthesis and motility. The protein is Flagellin C (flaC) of Vibrio cholerae serotype O1 (strain ATCC 39541 / Classical Ogawa 395 / O395).